We begin with the raw amino-acid sequence, 250 residues long: GTP cyclohydrolase 1 type 2 homolog (250 aa).

Residues histidine 63, histidine 64, aspartate 100, histidine 218, and glutamate 222 each contribute to the a divalent metal cation site.

It belongs to the GTP cyclohydrolase I type 2/NIF3 family. Homohexamer.

In Pyrococcus horikoshii (strain ATCC 700860 / DSM 12428 / JCM 9974 / NBRC 100139 / OT-3), this protein is GTP cyclohydrolase 1 type 2 homolog.